Here is a 140-residue protein sequence, read N- to C-terminus: Coiled-coil domain-containing protein 126 (140 aa).

Residues 1-35 form the signal peptide; it reads MFRTISRKNMSQKLSFLLLVFGLIWGLMLLHYTLQ. N110 carries N-linked (GlcNAc...) asparagine glycosylation. The span at 118 to 130 shows a compositional bias: low complexity; it reads NGTNGNLVPVTTN. A disordered region spans residues 118–140; sequence NGTNGNLVPVTTNKRTSVSGSVR. Over residues 131–140 the composition is skewed to polar residues; the sequence is KRTSVSGSVR.

It localises to the secreted. This is Coiled-coil domain-containing protein 126 (Ccdc126) from Mus musculus (Mouse).